A 261-amino-acid chain; its full sequence is Thiazole synthase (261 aa).

Lys-101 acts as the Schiff-base intermediate with DXP in catalysis. 1-deoxy-D-xylulose 5-phosphate contacts are provided by residues Gly-162, 188-189 (AG), and 210-211 (NT).

It belongs to the ThiG family. Homotetramer. Forms heterodimers with either ThiH or ThiS.

It is found in the cytoplasm. It carries out the reaction [ThiS sulfur-carrier protein]-C-terminal-Gly-aminoethanethioate + 2-iminoacetate + 1-deoxy-D-xylulose 5-phosphate = [ThiS sulfur-carrier protein]-C-terminal Gly-Gly + 2-[(2R,5Z)-2-carboxy-4-methylthiazol-5(2H)-ylidene]ethyl phosphate + 2 H2O + H(+). It participates in cofactor biosynthesis; thiamine diphosphate biosynthesis. Functionally, catalyzes the rearrangement of 1-deoxy-D-xylulose 5-phosphate (DXP) to produce the thiazole phosphate moiety of thiamine. Sulfur is provided by the thiocarboxylate moiety of the carrier protein ThiS. In vitro, sulfur can be provided by H(2)S. The chain is Thiazole synthase from Azoarcus sp. (strain BH72).